We begin with the raw amino-acid sequence, 213 residues long: Riboflavin/roseoflavin transporter RibM (213 aa).

The next 5 helical transmembrane spans lie at 15–35 (HIIW…ALGF), 38–58 (SLWT…AFYG), 107–129 (IAAA…SLSW), 136–158 (YIFV…FWFA), and 171–193 (FANG…LWGM).

This sequence belongs to the nicotinamide ribonucleoside (NR) uptake permease (TC 4.B.1) family.

It is found in the cell membrane. In terms of biological role, transports riboflavin and roseoflavin. Can also transport FMN and FAD. May confer roseoflavin resistance to S.davawensis, which naturally produces this antibiotic during stationary growth phase. The sequence is that of Riboflavin/roseoflavin transporter RibM from Streptomyces davaonensis (strain DSM 101723 / JCM 4913 / KCC S-0913 / 768).